Consider the following 404-residue polypeptide: O-antigen ligase (404 aa).

A run of 11 helical transmembrane segments spans residues 16–32 (IWNK…YFLD), 39–55 (HLII…QVSR), 67–84 (SVFY…YSIL), 96–115 (FENT…PVLL), 127–147 (VLFS…ILYI), 168–183 (SMVF…WLFR), 189–221 (LVFL…GVLW), 228–246 (WKLI…ALVI), 324–343 (ILYI…VYLY), 363–379 (YNAH…FYIV), and 385–401 (QVDI…LLAL).

The protein belongs to the O-antigen ligase family.

The protein resides in the cell inner membrane. It catalyses the reaction a lipid-linked O antigen + a lipid A-core oligosaccharide = a lipopolysaccharide + a polyisoprenyl diphosphate.. It functions in the pathway bacterial outer membrane biogenesis; lipopolysaccharide biosynthesis. Transferase involved in the biosynthesis of the lipopolysaccharide (LPS). Catalyzes the transfer of a polymerized O-antigen molecule from its polyprenyl diphosphate membrane anchor to a terminal sugar of the lipid A-core oligosaccharide, finalizing the biosynthesis of the lipopolysaccharide. May also be involved in a feedback mechanism to regulate O-unit synthesis, based on the availability of O units on the periplasmic face of the membrane. The chain is O-antigen ligase from Salmonella typhimurium (strain LT2 / SGSC1412 / ATCC 700720).